The sequence spans 135 residues: MRRANRLRRPAQFRRVRQTGRTFSSAWLTLTVAPGRRDGVRCGFITGRRLGKAVQRNRARRRVREAVRLLLPSLTTGYDLLFAIRSPEVIEAPFSQLQADIIRLLRQACLLTTPETEPVSPVSPTSLPQNERGSP.

A disordered region spans residues 115-135; the sequence is ETEPVSPVSPTSLPQNERGSP. The span at 122–135 shows a compositional bias: polar residues; the sequence is VSPTSLPQNERGSP.

Belongs to the RnpA family. Consists of a catalytic RNA component (M1 or rnpB) and a protein subunit.

The catalysed reaction is Endonucleolytic cleavage of RNA, removing 5'-extranucleotides from tRNA precursor.. Its function is as follows. RNaseP catalyzes the removal of the 5'-leader sequence from pre-tRNA to produce the mature 5'-terminus. It can also cleave other RNA substrates such as 4.5S RNA. The protein component plays an auxiliary but essential role in vivo by binding to the 5'-leader sequence and broadening the substrate specificity of the ribozyme. The chain is Ribonuclease P protein component from Chloroflexus aggregans (strain MD-66 / DSM 9485).